A 500-amino-acid chain; its full sequence is ACT domain-containing protein ACR2 (500 aa).

4 ACT domains span residues 39–121, 136–213, 298–373, and 376–459; these read VVKV…EANN, AIEM…ADPA, IVTV…RVCE, and KLEL…TVGS. Positions 450-478 are disordered; the sequence is EDTKIDTVGSDEPTASASATPQRQPQPHR. A compositionally biased stretch (polar residues) spans 462 to 474; that stretch reads PTASASATPQRQP.

Functionally, may bind amino acids. In Arabidopsis thaliana (Mouse-ear cress), this protein is ACT domain-containing protein ACR2.